The following is a 247-amino-acid chain: Epidermal cell differentiation inhibitor (247 aa).

The first 35 residues, 1–35 (MKNKLLFKIFLSLSLALSVYSINDKIIEVSNTSLA), serve as a signal peptide directing secretion. A TR mART core domain is found at 39 to 247 (KNFTDLDEAT…IIITAIVFKK (209 aa)). Residues arginine 120, serine 173, and glutamate 215 contribute to the active site.

The protein to ADP-ribosyltransferase C3 of Clostridium.

Functionally, inhibits terminal differentiation of cultured mouse keratinocytes. In culture, also inhibits the differentiation of human keratinocytes. Probable ADP-ribosyltransferase. The chain is Epidermal cell differentiation inhibitor from Staphylococcus aureus.